We begin with the raw amino-acid sequence, 244 residues long: T-cell immunoreceptor with Ig and ITIM domains (244 aa).

Positions 1–21 are cleaved as a signal peptide; sequence MRWCLLLIWAQGLRQAPLASG. Residues 22 to 124 form the Ig-like V-type domain; the sequence is MMTGTIETTG…DGTYTGRIFL (103 aa). At 22–141 the chain is on the extracellular side; sequence MMTGTIETTG…AEHGARFQIP (120 aa). 2 N-linked (GlcNAc...) asparagine glycosylation sites follow: Asn-32 and Asn-101. Positions 32 to 42 are homodimerization; that stretch reads NISAEKGGSII. A disulfide bridge links Cys-45 with Cys-108. A helical transmembrane segment spans residues 142–162; sequence LLGAMAATLVVICTAVIVVVA. Over 163–244 the chain is Cytoplasmic; it reads LTRKKKALRI…GNCSFFTETG (82 aa). Residue Tyr-225 is modified to Phosphotyrosine. An ITIM motif motif is present at residues 229–234; sequence LSYRSL.

As to quaternary structure, homodimer in cis; binds with high affinity to PVR, forming a heterotetrameric assembly of two TIGIT and two PVR molecules. Binds with lower affinity to NECTIN2 and NECTIN3. Interacts with GRB2. Interacts with NECTIN4. In terms of tissue distribution, expressed at low levels on peripheral memory and regulatory CD4+ T-cells and NK cells and is up-regulated following activation of these cells (at protein level).

Its subcellular location is the cell membrane. Inhibitory receptor that plays a role in the modulation of immune responses. Suppresses T-cell activation by promoting the generation of mature immunoregulatory dendritic cells. Upon binding to its ligands PVR/CD155 or NECTIN2/CD112, which are expressed on antigen-presenting cells, sends inhibitory signals to the T-cell or NK cell. Mechanistically, interaction with ligand leads to phosphorylation of the cytoplasmic tail by Src family tyrosine kinases such as FYN or LCK, allowing subsequent binding to adapter GRB2 and SHIP1/INPP5D. In turn, inhibits PI3K and MAPK signaling cascades. In addition, associates with beta-arrestin-2/ARRB2 to recruit SHIP1/INPP5D that suppresses autoubiquitination of TRAF6 and subsequently inhibits NF-kappa-B signaling pathway. Also acts as a receptor for NECTIN4 to inhibit NK cell cytotoxicity. This is T-cell immunoreceptor with Ig and ITIM domains (TIGIT) from Homo sapiens (Human).